Here is a 912-residue protein sequence, read N- to C-terminus: Protein translocase subunit SecA (912 aa).

ATP contacts are provided by residues Gln87, 105–109, and Asp508; that span reads GEGKT. The interval 865-912 is disordered; that stretch reads DEEAAQVQSGNAPVPVSQVTRDEPKVGRNDPCPCGSGKKYKHCHGQLS. Zn(2+)-binding residues include Cys896, Cys898, Cys907, and His908. Over residues 902–912 the composition is skewed to basic residues; it reads KKYKHCHGQLS.

The protein belongs to the SecA family. In terms of assembly, monomer and homodimer. Part of the essential Sec protein translocation apparatus which comprises SecA, SecYEG and auxiliary proteins SecDF-YajC and YidC. Zn(2+) is required as a cofactor.

It localises to the cell inner membrane. It is found in the cytoplasm. It carries out the reaction ATP + H2O + cellular proteinSide 1 = ADP + phosphate + cellular proteinSide 2.. Part of the Sec protein translocase complex. Interacts with the SecYEG preprotein conducting channel. Has a central role in coupling the hydrolysis of ATP to the transfer of proteins into and across the cell membrane, serving both as a receptor for the preprotein-SecB complex and as an ATP-driven molecular motor driving the stepwise translocation of polypeptide chains across the membrane. In Xanthomonas oryzae pv. oryzae (strain MAFF 311018), this protein is Protein translocase subunit SecA.